The chain runs to 280 residues: Phosphonates import ATP-binding protein PhnC (280 aa).

The ABC transporter domain maps to 4–239 (ITVTNLHKSY…VIDDIYGNIQ (236 aa)). 36-43 (GESGAGKS) serves as a coordination point for ATP. Positions 246 to 280 (GDDANADVAPTTSSDGGTDAAGGPDQQPASDPHLS) are disordered.

Belongs to the ABC transporter superfamily. Phosphonates importer (TC 3.A.1.9.1) family. The complex is composed of two ATP-binding proteins (PhnC), two transmembrane proteins (PhnE) and a solute-binding protein (PhnD).

Its subcellular location is the cell membrane. It carries out the reaction phosphonate(out) + ATP + H2O = phosphonate(in) + ADP + phosphate + H(+). In terms of biological role, part of the ABC transporter complex PhnCDE involved in phosphonates import. Responsible for energy coupling to the transport system. This is Phosphonates import ATP-binding protein PhnC from Halobacterium salinarum (strain ATCC 700922 / JCM 11081 / NRC-1) (Halobacterium halobium).